A 316-amino-acid chain; its full sequence is Methionyl-tRNA formyltransferase (316 aa).

112 to 115 (SLLP) contributes to the (6S)-5,6,7,8-tetrahydrofolate binding site.

Belongs to the Fmt family.

It carries out the reaction L-methionyl-tRNA(fMet) + (6R)-10-formyltetrahydrofolate = N-formyl-L-methionyl-tRNA(fMet) + (6S)-5,6,7,8-tetrahydrofolate + H(+). Functionally, attaches a formyl group to the free amino group of methionyl-tRNA(fMet). The formyl group appears to play a dual role in the initiator identity of N-formylmethionyl-tRNA by promoting its recognition by IF2 and preventing the misappropriation of this tRNA by the elongation apparatus. The sequence is that of Methionyl-tRNA formyltransferase from Haemophilus ducreyi (strain 35000HP / ATCC 700724).